Consider the following 446-residue polypeptide: MNLYNNSNSSGSSNSSSSSNNKTNIDYNDINNNDILTPKGYHTSIYIDDNDLNNNQIINKNNNNNHNRNNNNNNNNNNNHNNPKKMVINLNPSGIFIPLMNDFDDDDDDEQESLIKNNKITIPTINSQIAIPILNNNDNNNNSNNKTEQTTTTTTIIKNTTIFNNKTISFGRIGFRSIVIFLILVPYIYILNFAIFPWTVNYETERKGKIHSFISMALVIQMLCNYYLCSTTDPGSFKDTISPSYYLLHPISSTDSNDHKKWCNKCNHQKPERAHHCRYCNRCVLRMDHHCQWLQNCIGLFNQKYFVLFLFYTSISIIYFFTLLIKRSIELVTKYTMEKTLPSFDLLHLFLLGILIIILIIAGISIMALLWTQIALISKGLTTIEHEDKKRKYQQPNYLNLYKKYDKGSIISNFSIVFGNLSFLWLLPTIPNNLKITSKKGDIFIV.

Disordered regions lie at residues 1–33 (MNLY…INNN) and 56–83 (QIIN…HNNP). Residues Asn5, Asn8, Asn14, and Asn21 are each glycosylated (N-linked (GlcNAc...) asparagine). Residues 56 to 81 (QIINKNNNNNHNRNNNNNNNNNNNHN) are compositionally biased toward low complexity. 4 N-linked (GlcNAc...) asparagine glycosylation sites follow: Asn141, Asn145, Asn159, and Asn165. The next 5 membrane-spanning stretches (helical) occupy residues 178–198 (IVIF…IFPW), 210–230 (IHSF…YLCS), 305–325 (YFVL…TLLI), 349–369 (LFLL…IMAL), and 410–430 (IISN…LPTI). In terms of domain architecture, DHHC spans 261–311 (KWCNKCNHQKPERAHHCRYCNRCVLRMDHHCQWLQNCIGLFNQKYFVLFLF).

The protein belongs to the DHHC palmitoyltransferase family.

It localises to the membrane. It carries out the reaction L-cysteinyl-[protein] + hexadecanoyl-CoA = S-hexadecanoyl-L-cysteinyl-[protein] + CoA. The protein is Putative ZDHHC-type palmitoyltransferase 2 of Dictyostelium discoideum (Social amoeba).